The following is a 177-amino-acid chain: Coatomer subunit zeta-1 (177 aa).

Belongs to the adaptor complexes small subunit family. In terms of assembly, oligomeric complex that consists of at least the alpha, beta, beta', gamma, delta, epsilon and zeta subunits.

The protein localises to the cytoplasm. It localises to the golgi apparatus membrane. The protein resides in the cytoplasmic vesicle. Its subcellular location is the COPI-coated vesicle membrane. In terms of biological role, the coatomer is a cytosolic protein complex that binds to dilysine motifs and reversibly associates with Golgi non-clathrin-coated vesicles, which further mediate biosynthetic protein transport from the ER, via the Golgi up to the trans Golgi network. Coatomer complex is required for budding from Golgi membranes, and is essential for the retrograde Golgi-to-ER transport of dilysine-tagged proteins. The zeta subunit may be involved in regulating the coat assembly and, hence, the rate of biosynthetic protein transport due to its association-dissociation properties with the coatomer complex. The polypeptide is Coatomer subunit zeta-1 (COPZ1) (Oryza sativa subsp. japonica (Rice)).